A 78-amino-acid chain; its full sequence is Omega-conotoxin-like ArMKLT1-011 (78 aa).

An N-terminal signal peptide occupies residues M1–A22. A propeptide spanning residues V23–D48 is cleaved from the precursor. Cystine bridges form between C52/C69, C59/C73, and C68/C77.

Belongs to the conotoxin O1 superfamily. Expressed by the venom duct.

The protein localises to the secreted. Functionally, omega-conotoxins act at presynaptic membranes, they bind and block voltage-gated calcium channels (Cav). This chain is Omega-conotoxin-like ArMKLT1-011, found in Conus arenatus (Sand-dusted cone).